The chain runs to 419 residues: L-rhamnose isomerase (419 aa).

3 residues coordinate Mn(2+): His262, Asp294, and Asp296.

It belongs to the rhamnose isomerase family. In terms of assembly, homotetramer. Mn(2+) is required as a cofactor.

Its subcellular location is the cytoplasm. It carries out the reaction L-rhamnopyranose = L-rhamnulose. It participates in carbohydrate degradation; L-rhamnose degradation; glycerone phosphate from L-rhamnose: step 1/3. Its function is as follows. Catalyzes the interconversion of L-rhamnose and L-rhamnulose. This is L-rhamnose isomerase from Salmonella enteritidis PT4 (strain P125109).